The following is a 410-amino-acid chain: NIPA-like protein 3 (410 aa).

The interval 1 to 24 (MDGAHSAGLQLQPLPPTSGATSTS) is disordered. 9 helical membrane-spanning segments follow: residues 37–57 (NLIG…ALNL), 80–100 (WWLG…SYAF), 105–125 (LIVP…IIFI), 139–159 (VLSF…VTFA), 175–195 (LVSW…CLLL), 206–226 (IVVI…TVKA), 244–264 (PIFY…ATFL), 275–295 (LIAS…GAIF), and 304–324 (ALHI…VFLI). Residue serine 376 is modified to Phosphoserine. Positions 389–410 (EEHSSRSTPGVPYRVLEHTKKE) are disordered.

It belongs to the NIPA family.

It localises to the membrane. The protein is NIPA-like protein 3 (Nipal3) of Mus musculus (Mouse).